The primary structure comprises 141 residues: Nucleoside diphosphate kinase (141 aa).

6 residues coordinate ATP: Lys-11, Phe-59, Arg-87, Thr-93, Arg-104, and Asn-114. Catalysis depends on His-117, which acts as the Pros-phosphohistidine intermediate.

This sequence belongs to the NDK family. Homotetramer. Mg(2+) serves as cofactor.

The protein resides in the cytoplasm. It catalyses the reaction a 2'-deoxyribonucleoside 5'-diphosphate + ATP = a 2'-deoxyribonucleoside 5'-triphosphate + ADP. The enzyme catalyses a ribonucleoside 5'-diphosphate + ATP = a ribonucleoside 5'-triphosphate + ADP. Major role in the synthesis of nucleoside triphosphates other than ATP. The ATP gamma phosphate is transferred to the NDP beta phosphate via a ping-pong mechanism, using a phosphorylated active-site intermediate. In Haemophilus influenzae (strain 86-028NP), this protein is Nucleoside diphosphate kinase.